A 668-amino-acid polypeptide reads, in one-letter code: Penicillin-binding protein 3 (668 aa).

A helical transmembrane segment spans residues L7–K23. S410 acts as the Acyl-ester intermediate in catalysis.

Belongs to the transpeptidase family.

It localises to the cell membrane. It is found in the forespore inner membrane. The protein resides in the forespore outer membrane. The protein localises to the membrane raft. The catalysed reaction is Preferential cleavage: (Ac)2-L-Lys-D-Ala-|-D-Ala. Also transpeptidation of peptidyl-alanyl moieties that are N-acyl substituents of D-alanine.. It participates in cell wall biogenesis; peptidoglycan biosynthesis. Functionally, penicillin-binding proteins (PBPs) function in the late steps of murein biosynthesis. Probably required for both cortical and vegetative peptidoglycan synthesis. Although not usually required for cell division, in the absence of PBP 2B (pbpB) it becomes essential. Confers resistance to oxacillin and cephalexin. The protein is Penicillin-binding protein 3 of Bacillus subtilis (strain 168).